The following is an 86-amino-acid chain: Small ribosomal subunit protein uS17 (86 aa).

It belongs to the universal ribosomal protein uS17 family. Part of the 30S ribosomal subunit.

Functionally, one of the primary rRNA binding proteins, it binds specifically to the 5'-end of 16S ribosomal RNA. This is Small ribosomal subunit protein uS17 from Bifidobacterium adolescentis (strain ATCC 15703 / DSM 20083 / NCTC 11814 / E194a).